Here is a 926-residue protein sequence, read N- to C-terminus: Alpha-L-rhamnosidase (926 aa).

The signal sequence occupies residues 1–25 (MILHKSVFKSYIYVLTYFVFFSVMS). The N-palmitoyl cysteine moiety is linked to residue cysteine 26. Residue cysteine 26 is the site of S-diacylglycerol cysteine attachment. Residues aspartate 504, 508–510 (RDE), aspartate 517, and tryptophan 569 each bind alpha-L-rhamnose. The active-site Proton donor is glutamate 510. The Proton acceptor role is filled by glutamate 779. Histidine 800 provides a ligand contact to alpha-L-rhamnose.

This sequence belongs to the glycosyl hydrolase 78 family.

It is found in the cell membrane. The catalysed reaction is Hydrolysis of terminal non-reducing alpha-L-rhamnose residues in alpha-L-rhamnosides.. Alpha-L-rhamnosidase involved in ulvan degradation. Ulvan is the main polysaccharide component of the Ulvales (green seaweed) cell wall. It is composed of disaccharide building blocks comprising 3-sulfated rhamnose (Rha3S) linked to D-glucuronic acid (GlcA), L-iduronic acid (IduA), or D-xylose (Xyl). Alpha-L-rhamnosidase converts Rha-Xyl-Rha3S, the product of a sulfatase acting on Rha3S-Xyl-Rha3S oligosaccharides, to Rha and Xyl-Rha3S. The enzyme is able to degrade p-nitrophenyl-alpha-L-rhamnopyranoside (PNP-Rha) in vitro. The polypeptide is Alpha-L-rhamnosidase (Formosa agariphila (strain DSM 15362 / KCTC 12365 / LMG 23005 / KMM 3901 / M-2Alg 35-1)).